Reading from the N-terminus, the 168-residue chain is Protein-export protein SecB (168 aa).

Residues Met1–Glu10 are compositionally biased toward polar residues. Positions Met1 to Pro22 are disordered.

The protein belongs to the SecB family. In terms of assembly, homotetramer, a dimer of dimers. One homotetramer interacts with 1 SecA dimer.

It is found in the cytoplasm. Functionally, one of the proteins required for the normal export of preproteins out of the cell cytoplasm. It is a molecular chaperone that binds to a subset of precursor proteins, maintaining them in a translocation-competent state. It also specifically binds to its receptor SecA. In Parvibaculum lavamentivorans (strain DS-1 / DSM 13023 / NCIMB 13966), this protein is Protein-export protein SecB.